We begin with the raw amino-acid sequence, 1235 residues long: ATP-dependent helicase/nuclease subunit A (1235 aa).

In terms of domain architecture, UvrD-like helicase ATP-binding spans 12-482; that stretch reads SLWTDDQWKA…IDLSQNFRSR (471 aa). Residue 33–40 coordinates ATP; the sequence is AAAGSGKT. Residues 509 to 800 form the UvrD-like helicase C-terminal domain; that stretch reads AAELTLGANF…RMMTIHASKG (292 aa).

It belongs to the helicase family. AddA subfamily. As to quaternary structure, heterodimer of AddA and AddB/RexB. Mg(2+) serves as cofactor.

It catalyses the reaction Couples ATP hydrolysis with the unwinding of duplex DNA by translocating in the 3'-5' direction.. The catalysed reaction is ATP + H2O = ADP + phosphate + H(+). In terms of biological role, the heterodimer acts as both an ATP-dependent DNA helicase and an ATP-dependent, dual-direction single-stranded exonuclease. Recognizes the chi site generating a DNA molecule suitable for the initiation of homologous recombination. The AddA nuclease domain is required for chi fragment generation; this subunit has the helicase and 3' -&gt; 5' nuclease activities. In Listeria monocytogenes serovar 1/2a (strain ATCC BAA-679 / EGD-e), this protein is ATP-dependent helicase/nuclease subunit A.